The primary structure comprises 82 residues: Small ribosomal subunit protein uS17 (82 aa).

The protein belongs to the universal ribosomal protein uS17 family. In terms of assembly, part of the 30S ribosomal subunit.

Functionally, one of the primary rRNA binding proteins, it binds specifically to the 5'-end of 16S ribosomal RNA. The sequence is that of Small ribosomal subunit protein uS17 from Rickettsia rickettsii (strain Iowa).